A 198-amino-acid chain; its full sequence is Recombination protein RecR (198 aa).

The segment at 56-71 (CTECRDFSETKICAIC) adopts a C4-type zinc-finger fold. A Toprim domain is found at 79 to 174 (HQLCVVESPP…RPSRLAQGLP (96 aa)).

This sequence belongs to the RecR family.

Functionally, may play a role in DNA repair. It seems to be involved in an RecBC-independent recombinational process of DNA repair. It may act with RecF and RecO. The polypeptide is Recombination protein RecR (Xylella fastidiosa (strain Temecula1 / ATCC 700964)).